The chain runs to 500 residues: Palmitoleoyl-protein carboxylesterase notum1a (500 aa).

A signal peptide spans 1–26 (MKRSLWVMQVLHWAVMLALVQCGALG). An N-linked (GlcNAc...) asparagine glycan is attached at Asn101. Active-site charge relay system residues include Ser237, Asp344, and His393.

This sequence belongs to the pectinacetylesterase family. Notum subfamily.

The protein resides in the secreted. The catalysed reaction is [Wnt protein]-O-(9Z)-hexadecenoyl-L-serine + H2O = [Wnt protein]-L-serine + (9Z)-hexadecenoate + H(+). Its function is as follows. Carboxylesterase that acts as a key negative regulator of the Wnt signaling pathway. Acts by specifically mediating depalmitoleoylation of WNT proteins. Serine palmitoleoylation of WNT proteins is required for efficient binding to frizzled receptors. The protein is Palmitoleoyl-protein carboxylesterase notum1a of Danio rerio (Zebrafish).